Consider the following 201-residue polypeptide: Large ribosomal subunit protein uL4 (201 aa).

The disordered stretch occupies residues 45–71; that stretch reads AQKTRAEVTGSGKKPWRQKGTGRARAG.

This sequence belongs to the universal ribosomal protein uL4 family. Part of the 50S ribosomal subunit.

One of the primary rRNA binding proteins, this protein initially binds near the 5'-end of the 23S rRNA. It is important during the early stages of 50S assembly. It makes multiple contacts with different domains of the 23S rRNA in the assembled 50S subunit and ribosome. Functionally, forms part of the polypeptide exit tunnel. In Shewanella halifaxensis (strain HAW-EB4), this protein is Large ribosomal subunit protein uL4.